The sequence spans 305 residues: tRNA dimethylallyltransferase (305 aa).

Residue 12 to 19 (GPTASGKT) participates in ATP binding. 14 to 19 (TASGKT) lines the substrate pocket. Interaction with substrate tRNA regions lie at residues 37 to 40 (DSAL), 161 to 165 (QRLAR), and 242 to 247 (RCVGYR).

Belongs to the IPP transferase family. In terms of assembly, monomer. Mg(2+) is required as a cofactor.

The catalysed reaction is adenosine(37) in tRNA + dimethylallyl diphosphate = N(6)-dimethylallyladenosine(37) in tRNA + diphosphate. Catalyzes the transfer of a dimethylallyl group onto the adenine at position 37 in tRNAs that read codons beginning with uridine, leading to the formation of N6-(dimethylallyl)adenosine (i(6)A). The sequence is that of tRNA dimethylallyltransferase from Psychromonas ingrahamii (strain DSM 17664 / CCUG 51855 / 37).